The sequence spans 698 residues: Adhesion G protein-coupled receptor F4 (698 aa).

A signal peptide spans 1-19; that stretch reads MKPWIAMVCCLVFFLTTEC. At 20-409 the chain is on the extracellular side; sequence SHSKPKTHRK…VKNTILNHIT (390 aa). 7 N-linked (GlcNAc...) asparagine glycosylation sites follow: Asn61, Asn168, Asn213, Asn268, Asn290, Asn344, and Asn375. The GAIN-B domain maps to 250–401; it reads RISHSSSEHS…SILMSSKPVK (152 aa). Disulfide bonds link Cys353-Cys380 and Cys368-Cys382. The tract at residues 353 to 401 is GPS; sequence CVSWDPATGQWDESPCTVMSDINSTVKCRCRHTKAVTSFSILMSSKPVK. Residues 410–430 form a helical membrane-spanning segment; the sequence is FIGLSISIFSLVLCLVIEAIV. Residues 431–444 are Cytoplasmic-facing; sequence WSRVVVTEISYMRH. A helical membrane pass occupies residues 445–465; it reads VCIVNIAVSLLTANVWFIIGS. Asn466 is a glycosylation site (N-linked (GlcNAc...) asparagine). At 466-486 the chain is on the extracellular side; the sequence is NFSANVQEDHKWCVAVTFLCH. A helical membrane pass occupies residues 487 to 507; it reads FFFLSLFFWMLFKALLIVYGI. The Cytoplasmic portion of the chain corresponds to 508–518; that stretch reads LVVFRRMMKSR. The chain crosses the membrane as a helical span at residues 519-539; it reads MMAIGFAIGYGCPLVIAVITV. At 540–566 the chain is on the extracellular side; the sequence is TVTEPGEGYTRKDACWLNWNQTKALFA. Asn559 is a glycosylation site (N-linked (GlcNAc...) asparagine). Residues 567-587 form a helical membrane-spanning segment; that stretch reads FAIPALAIVAVNLLVVLAVAI. The Cytoplasmic segment spans residues 588-611; it reads NTQRPLIGSSKSQDMAIVFRISKN. The chain crosses the membrane as a helical span at residues 612-632; sequence VAILTPLLGLTWGFGLTTLLE. Topologically, residues 633–635 are extracellular; it reads GVH. The helical transmembrane segment at 636–656 threads the bilayer; sequence LVFHIIFALLNAFQGFFILLF. Topologically, residues 657–698 are cytoplasmic; it reads GTIMDHKIRDALRMRVSSLKGKSRAAEKVSLSPANGSRILNR.

The protein belongs to the G-protein coupled receptor 2 family. Adhesion G-protein coupled receptor (ADGR) subfamily. Expressed in squamous epithelia.

It is found in the membrane. Functionally, orphan receptor. In Mus musculus (Mouse), this protein is Adhesion G protein-coupled receptor F4 (Adgrf4).